The chain runs to 195 residues: 22.0 kDa heat shock protein (195 aa).

The N-terminal stretch at 1–21 (MMKHLLSIFFIGALLLGNIKT) is a signal peptide. The 119-residue stretch at 62–180 (RDTSVALSPA…GPRVVNIAAE (119 aa)) folds into the sHSP domain. N160 carries an N-linked (GlcNAc...) asparagine glycan.

This sequence belongs to the small heat shock protein (HSP20) family. May form oligomeric structures.

Its subcellular location is the endoplasmic reticulum. In Arabidopsis thaliana (Mouse-ear cress), this protein is 22.0 kDa heat shock protein (HSP22.0).